A 474-amino-acid chain; its full sequence is Glycogen synthase (474 aa).

K12 provides a ligand contact to ADP-alpha-D-glucose.

This sequence belongs to the glycosyltransferase 1 family. Bacterial/plant glycogen synthase subfamily.

It carries out the reaction [(1-&gt;4)-alpha-D-glucosyl](n) + ADP-alpha-D-glucose = [(1-&gt;4)-alpha-D-glucosyl](n+1) + ADP + H(+). The protein operates within glycan biosynthesis; glycogen biosynthesis. Synthesizes alpha-1,4-glucan chains using ADP-glucose. This Xanthomonas campestris pv. campestris (strain 8004) protein is Glycogen synthase.